The primary structure comprises 204 residues: LexA repressor (204 aa).

Residues 29–49 (VREICKGVGLSSTSSVHGHLS) constitute a DNA-binding region (H-T-H motif). Active-site for autocatalytic cleavage activity residues include S126 and K163.

The protein belongs to the peptidase S24 family. In terms of assembly, homodimer.

The catalysed reaction is Hydrolysis of Ala-|-Gly bond in repressor LexA.. Represses a number of genes involved in the response to DNA damage (SOS response), including recA and lexA. In the presence of single-stranded DNA, RecA interacts with LexA causing an autocatalytic cleavage which disrupts the DNA-binding part of LexA, leading to derepression of the SOS regulon and eventually DNA repair. The polypeptide is LexA repressor (Clostridium novyi (strain NT)).